A 512-amino-acid polypeptide reads, in one-letter code: Altronate oxidoreductase (512 aa).

26–37 (VLQFGEGNFLRG) provides a ligand contact to NAD(+).

The protein belongs to the mannitol dehydrogenase family. UxaB subfamily.

It carries out the reaction D-altronate + NAD(+) = keto-D-tagaturonate + NADH + H(+). It functions in the pathway carbohydrate metabolism; pentose and glucuronate interconversion. The protein is Altronate oxidoreductase of Halalkalibacterium halodurans (strain ATCC BAA-125 / DSM 18197 / FERM 7344 / JCM 9153 / C-125) (Bacillus halodurans).